The chain runs to 304 residues: Lipoprotein signal peptidase (304 aa).

The next 3 helical transmembrane spans lie at 28–48 (IKIK…IVFV), 86–106 (PAVP…TFIF), and 112–132 (LIVL…DRSV). Residues D148 and D163 contribute to the active site. Residues 163-183 (DICIVTGFALIFLTFVVDIFL) traverse the membrane as a helical segment.

It belongs to the peptidase A8 family.

The protein resides in the cell membrane. The catalysed reaction is Release of signal peptides from bacterial membrane prolipoproteins. Hydrolyzes -Xaa-Yaa-Zaa-|-(S,diacylglyceryl)Cys-, in which Xaa is hydrophobic (preferably Leu), and Yaa (Ala or Ser) and Zaa (Gly or Ala) have small, neutral side chains.. The protein operates within protein modification; lipoprotein biosynthesis (signal peptide cleavage). This protein specifically catalyzes the removal of signal peptides from prolipoproteins. In Mycoplasmoides gallisepticum (strain R(low / passage 15 / clone 2)) (Mycoplasma gallisepticum), this protein is Lipoprotein signal peptidase.